The following is a 114-amino-acid chain: DNA-binding protein rrnAC3180 (114 aa).

A compositionally biased stretch (acidic residues) spans 1–11 (MSGDPSEEELE). The disordered stretch occupies residues 1-45 (MSGDPSEEELEELRKKKMEQLKEQQGGEGEGQEAAQQQAEAQKQA). Over residues 12–22 (ELRKKKMEQLK) the composition is skewed to basic and acidic residues. Residues 32–45 (QEAAQQQAEAQKQA) are compositionally biased toward low complexity.

Belongs to the PDCD5 family.

In Haloarcula marismortui (strain ATCC 43049 / DSM 3752 / JCM 8966 / VKM B-1809) (Halobacterium marismortui), this protein is DNA-binding protein rrnAC3180.